The primary structure comprises 104 residues: Large ribosomal subunit protein uL24 (104 aa).

It belongs to the universal ribosomal protein uL24 family. As to quaternary structure, part of the 50S ribosomal subunit.

One of two assembly initiator proteins, it binds directly to the 5'-end of the 23S rRNA, where it nucleates assembly of the 50S subunit. Functionally, one of the proteins that surrounds the polypeptide exit tunnel on the outside of the subunit. This chain is Large ribosomal subunit protein uL24, found in Flavobacterium johnsoniae (strain ATCC 17061 / DSM 2064 / JCM 8514 / BCRC 14874 / CCUG 350202 / NBRC 14942 / NCIMB 11054 / UW101) (Cytophaga johnsonae).